The chain runs to 30 residues: U10-ctenitoxin-Co1b (30 aa).

Disulfide bonds link C2-C17 and C9-C22.

Expressed by the venom gland.

The protein localises to the secreted. Functionally, antagonist of L-type calcium channels (Cav1/CACNA1). In Ctenus ornatus (Brazilian spider), this protein is U10-ctenitoxin-Co1b.